Reading from the N-terminus, the 436-residue chain is Divalent metal cation transporter MntH (436 aa).

Residues M1–A22 show a composition bias toward basic and acidic residues. Positions M1–T31 are disordered. 11 helical membrane passes run I40–F60, G71–L91, L115–F135, L144–L164, L177–A197, G216–L236, V264–A284, L304–G324, L354–L374, I375–F395, and F411–W431.

Belongs to the NRAMP family.

The protein localises to the cell membrane. Its function is as follows. H(+)-stimulated, divalent metal cation uptake system. The polypeptide is Divalent metal cation transporter MntH (Deinococcus radiodurans (strain ATCC 13939 / DSM 20539 / JCM 16871 / CCUG 27074 / LMG 4051 / NBRC 15346 / NCIMB 9279 / VKM B-1422 / R1)).